The primary structure comprises 83 residues: Probable calcium-binding protein CML29 (83 aa).

EF-hand domains lie at 5–40 (TEKA…LGSV) and 43–75 (DDVK…NRGL). D18, N20, D22, K24, E29, D53, D55, D57, N59, and E64 together coordinate Ca(2+).

Functionally, potential calcium sensor. The protein is Probable calcium-binding protein CML29 (CML29) of Arabidopsis thaliana (Mouse-ear cress).